The chain runs to 160 residues: Eukaryotic translation initiation factor 5A (160 aa).

Positions 1–12 (MSDEEHHFESKA) are enriched in basic and acidic residues. Residues 1–21 (MSDEEHHFESKADAGASKTFP) are disordered. Lys-52 carries the hypusine modification.

The protein belongs to the eIF-5A family. In terms of processing, lys-53 undergoes hypusination, a unique post-translational modification that consists in the addition of a butylamino group from spermidine to lysine side chain, leading to the formation of the unusual amino acid hypusine. eIF-5As are the only known proteins to undergo this modification, which is essential for their function.

Translation factor that promotes translation elongation and termination, particularly upon ribosome stalling at specific amino acid sequence contexts. Binds between the exit (E) and peptidyl (P) site of the ribosome and promotes rescue of stalled ribosome: specifically required for efficient translation of polyproline-containing peptides as well as other motifs that stall the ribosome. Acts as a ribosome quality control (RQC) cofactor by joining the RQC complex to facilitate peptidyl transfer during CAT tailing step. This is Eukaryotic translation initiation factor 5A from Manihot esculenta (Cassava).